The following is a 197-amino-acid chain: Nucleoside triphosphate pyrophosphatase (197 aa).

Asp-72 functions as the Proton acceptor in the catalytic mechanism.

The protein belongs to the Maf family. A divalent metal cation is required as a cofactor.

It localises to the cytoplasm. The enzyme catalyses a ribonucleoside 5'-triphosphate + H2O = a ribonucleoside 5'-phosphate + diphosphate + H(+). It carries out the reaction a 2'-deoxyribonucleoside 5'-triphosphate + H2O = a 2'-deoxyribonucleoside 5'-phosphate + diphosphate + H(+). In terms of biological role, nucleoside triphosphate pyrophosphatase. May have a dual role in cell division arrest and in preventing the incorporation of modified nucleotides into cellular nucleic acids. This chain is Nucleoside triphosphate pyrophosphatase, found in Corynebacterium efficiens (strain DSM 44549 / YS-314 / AJ 12310 / JCM 11189 / NBRC 100395).